Reading from the N-terminus, the 344-residue chain is Ferrochelatase (344 aa).

Histidine 214 and glutamate 295 together coordinate Fe cation.

Belongs to the ferrochelatase family.

The protein resides in the cytoplasm. It carries out the reaction heme b + 2 H(+) = protoporphyrin IX + Fe(2+). It participates in porphyrin-containing compound metabolism; protoheme biosynthesis; protoheme from protoporphyrin-IX: step 1/1. In terms of biological role, catalyzes the ferrous insertion into protoporphyrin IX. In Rhizobium johnstonii (strain DSM 114642 / LMG 32736 / 3841) (Rhizobium leguminosarum bv. viciae), this protein is Ferrochelatase.